Consider the following 243-residue polypeptide: Leucyl/phenylalanyl-tRNA--protein transferase (243 aa).

This sequence belongs to the L/F-transferase family.

Its subcellular location is the cytoplasm. It carries out the reaction N-terminal L-lysyl-[protein] + L-leucyl-tRNA(Leu) = N-terminal L-leucyl-L-lysyl-[protein] + tRNA(Leu) + H(+). It catalyses the reaction N-terminal L-arginyl-[protein] + L-leucyl-tRNA(Leu) = N-terminal L-leucyl-L-arginyl-[protein] + tRNA(Leu) + H(+). The enzyme catalyses L-phenylalanyl-tRNA(Phe) + an N-terminal L-alpha-aminoacyl-[protein] = an N-terminal L-phenylalanyl-L-alpha-aminoacyl-[protein] + tRNA(Phe). Functions in the N-end rule pathway of protein degradation where it conjugates Leu, Phe and, less efficiently, Met from aminoacyl-tRNAs to the N-termini of proteins containing an N-terminal arginine or lysine. The chain is Leucyl/phenylalanyl-tRNA--protein transferase from Xylella fastidiosa (strain 9a5c).